Consider the following 368-residue polypeptide: tRNA/tmRNA (uracil-C(5))-methyltransferase (368 aa).

S-adenosyl-L-methionine-binding residues include Gln190, Tyr218, Asn223, Glu239, and Asp301. Cys326 functions as the Nucleophile in the catalytic mechanism. The Proton acceptor role is filled by Glu360.

Belongs to the class I-like SAM-binding methyltransferase superfamily. RNA M5U methyltransferase family. TrmA subfamily.

It catalyses the reaction uridine(54) in tRNA + S-adenosyl-L-methionine = 5-methyluridine(54) in tRNA + S-adenosyl-L-homocysteine + H(+). The enzyme catalyses uridine(341) in tmRNA + S-adenosyl-L-methionine = 5-methyluridine(341) in tmRNA + S-adenosyl-L-homocysteine + H(+). Functionally, dual-specificity methyltransferase that catalyzes the formation of 5-methyluridine at position 54 (m5U54) in all tRNAs, and that of position 341 (m5U341) in tmRNA (transfer-mRNA). The chain is tRNA/tmRNA (uracil-C(5))-methyltransferase from Aliivibrio fischeri (strain MJ11) (Vibrio fischeri).